Reading from the N-terminus, the 159-residue chain is Phosphopantetheine adenylyltransferase (159 aa).

An ATP-binding site is contributed by His-16. 3 residues coordinate substrate: Lys-40, Met-72, and Arg-86. ATP-binding positions include Gly-87–Arg-89, Glu-97, and Tyr-122–Ser-128.

It belongs to the bacterial CoaD family. In terms of assembly, homohexamer. Requires Mg(2+) as cofactor.

The protein resides in the cytoplasm. It catalyses the reaction (R)-4'-phosphopantetheine + ATP + H(+) = 3'-dephospho-CoA + diphosphate. It functions in the pathway cofactor biosynthesis; coenzyme A biosynthesis; CoA from (R)-pantothenate: step 4/5. Functionally, reversibly transfers an adenylyl group from ATP to 4'-phosphopantetheine, yielding dephospho-CoA (dPCoA) and pyrophosphate. This is Phosphopantetheine adenylyltransferase from Dehalococcoides mccartyi (strain ATCC BAA-2100 / JCM 16839 / KCTC 5957 / BAV1).